Here is a 1148-residue protein sequence, read N- to C-terminus: Small G protein signaling modulator 1 (1148 aa).

In terms of domain architecture, RUN spans 36–190; it reads HEDSSHIISF…EYTKMKTADH (155 aa). The segment at 256–297 is important for interaction with RAB9A and RAB9B; sequence LLYGKNNVLVQPRDDMEAVPGYLSLHQTADVMTLKWTPNQLM. Positions 301 to 350 are required for interaction with RAP family members; that stretch reads VGDLDYEKSVYWDYAMTIRLEEIVYLHCHQQVDSGGTVVLVSQDGIQRPP. Disordered stretches follow at residues 377–411, 700–830, and 871–894; these read DPPLWSQRGKGKVFPKLRKRSPQGSAESTSSDKDD, DSTI…PREE, and GWRSSETEKHGQADSEDNLSEEPE. Residues 385 to 397 show a composition bias toward basic residues; it reads GKGKVFPKLRKRS. In terms of domain architecture, Rab-GAP TBC spans 617–1081; the sequence is GIQPEIRKAV…LVWETIWAAK (465 aa). The span at 702-716 shows a compositional bias: polar residues; that stretch reads TISNESSQSCSSGRQ. The segment covering 742-751 has biased composition (basic and acidic residues); sequence AEGRLEEKQP. Polar residues predominate over residues 757–802; it reads NLVNGTCSPDSGHPSSHNFSSGLSEHSEPSLSTEDSVLDAQRNTPT. Composition is skewed to basic and acidic residues over residues 805–816 and 871–883; these read RPRDGSVDDRQS and GWRSSETEKHGQA. Acidic residues predominate over residues 884 to 894; the sequence is DSEDNLSEEPE.

The protein belongs to the RUTBC family. Interacts with RAB9A (GTP-bound form) and RAB9B (GTP-bound form); has much lower affinity for GDP-bound RAB9A and RAB9B. Interacts with RAB3A, RAB4A, RAB5A, RAB8A, RAB11A, RAP1A, RAP1B, RAP2A and RAP2B. No interaction with RAB27A. As to expression, mainly expressed in brain, heart and testis.

It is found in the golgi apparatus. The protein localises to the trans-Golgi network. Its subcellular location is the cytoplasmic vesicle membrane. The protein resides in the cytoplasm. Interacts with numerous Rab family members, functioning as Rab effector for some, and as GTPase activator for others. Promotes GTP hydrolysis by RAB34 and RAB36. Probably functions as a GTPase effector with RAB9A and RAB9B; does not stimulate GTP hydrolysis with RAB9A and RAB9B. The protein is Small G protein signaling modulator 1 (SGSM1) of Homo sapiens (Human).